Consider the following 130-residue polypeptide: DNA-directed RNA polymerase subunit omega (130 aa).

Residues 110-130 are disordered; it reads EELLKGLEGLAPPEEQPEEDE.

This sequence belongs to the RNA polymerase subunit omega family. As to quaternary structure, the RNAP catalytic core consists of 2 alpha, 1 beta, 1 beta' and 1 omega subunit. When a sigma factor is associated with the core the holoenzyme is formed, which can initiate transcription.

It carries out the reaction RNA(n) + a ribonucleoside 5'-triphosphate = RNA(n+1) + diphosphate. Functionally, promotes RNA polymerase assembly. Latches the N- and C-terminal regions of the beta' subunit thereby facilitating its interaction with the beta and alpha subunits. This is DNA-directed RNA polymerase subunit omega from Rhodopseudomonas palustris (strain HaA2).